The chain runs to 492 residues: Protein nucleotidyltransferase YdiU (492 aa).

ATP is bound by residues Gly-88, Gly-90, Arg-91, Lys-111, Asp-123, Gly-124, Arg-174, and Arg-181. Asp-250 (proton acceptor) is an active-site residue. 2 residues coordinate Mg(2+): Asn-251 and Asp-260. Asp-260 serves as a coordination point for ATP.

The protein belongs to the SELO family. Mg(2+) serves as cofactor. The cofactor is Mn(2+).

It catalyses the reaction L-seryl-[protein] + ATP = 3-O-(5'-adenylyl)-L-seryl-[protein] + diphosphate. The catalysed reaction is L-threonyl-[protein] + ATP = 3-O-(5'-adenylyl)-L-threonyl-[protein] + diphosphate. The enzyme catalyses L-tyrosyl-[protein] + ATP = O-(5'-adenylyl)-L-tyrosyl-[protein] + diphosphate. It carries out the reaction L-histidyl-[protein] + UTP = N(tele)-(5'-uridylyl)-L-histidyl-[protein] + diphosphate. It catalyses the reaction L-seryl-[protein] + UTP = O-(5'-uridylyl)-L-seryl-[protein] + diphosphate. The catalysed reaction is L-tyrosyl-[protein] + UTP = O-(5'-uridylyl)-L-tyrosyl-[protein] + diphosphate. Nucleotidyltransferase involved in the post-translational modification of proteins. It can catalyze the addition of adenosine monophosphate (AMP) or uridine monophosphate (UMP) to a protein, resulting in modifications known as AMPylation and UMPylation. The chain is Protein nucleotidyltransferase YdiU from Rhodopseudomonas palustris (strain HaA2).